A 413-amino-acid polypeptide reads, in one-letter code: Peptidase T (413 aa).

Histidine 81 contributes to the Zn(2+) binding site. Aspartate 83 is an active-site residue. Aspartate 143 serves as a coordination point for Zn(2+). Residue glutamate 178 is the Proton acceptor of the active site. Residues glutamate 179, aspartate 201, and histidine 383 each coordinate Zn(2+).

Belongs to the peptidase M20B family. In terms of assembly, homodimer. It depends on Zn(2+) as a cofactor.

The protein resides in the cytoplasm. The enzyme catalyses Release of the N-terminal residue from a tripeptide.. Inhibited by EDTA, by the reducing agents dithiothreitol and 13-mercaptoethanol, and by the divalent cation Cu(2+). In terms of biological role, cleaves the N-terminal amino acid of tripeptides. Has a broad specificity for tripeptides with no clear preference for a particular tripeptide. Tripeptides with proline in the second position are an exception and are not hydrolyzed. Does not hydrolyze dipeptides, tetrapeptides, or oligopeptides. The chain is Peptidase T (pepT) from Lactococcus lactis subsp. cremoris (Streptococcus cremoris).